A 431-amino-acid chain; its full sequence is Protein translocase subunit SecY (431 aa).

Transmembrane regions (helical) follow at residues 18 to 38 (IIFTLLMLIVFRLGSFIPVPH), 64 to 84 (LFNFSILAMGIMPYITASIII), 116 to 136 (FTIVLGFIQALGMSYGFNNMA), 146 to 166 (VGTYLLIAIVLTAGTAFLMWL), 175 to 195 (VGNGISIIIFAGIVAGIPQTI), 214 to 234 (IIKVVVILVAILAIVVGVIFI), 262 to 282 (LPLKVNPAGVIPVIFAVAFIT), 309 to 329 (PVGMGVYAALIIAFTYFYAFV), 369 to 389 (FVGSIFLAVIAILPVLFVNIA), and 390 to 410 (GLPSSAQIGGTSLLIVIGVAL).

The protein belongs to the SecY/SEC61-alpha family. Component of the Sec protein translocase complex. Heterotrimer consisting of SecY, SecE and SecG subunits. The heterotrimers can form oligomers, although 1 heterotrimer is thought to be able to translocate proteins. Interacts with the ribosome. Interacts with SecDF, and other proteins may be involved. Interacts with SecA.

The protein resides in the cell membrane. Functionally, the central subunit of the protein translocation channel SecYEG. Consists of two halves formed by TMs 1-5 and 6-10. These two domains form a lateral gate at the front which open onto the bilayer between TMs 2 and 7, and are clamped together by SecE at the back. The channel is closed by both a pore ring composed of hydrophobic SecY resides and a short helix (helix 2A) on the extracellular side of the membrane which forms a plug. The plug probably moves laterally to allow the channel to open. The ring and the pore may move independently. In Bacillus licheniformis (strain ATCC 14580 / DSM 13 / JCM 2505 / CCUG 7422 / NBRC 12200 / NCIMB 9375 / NCTC 10341 / NRRL NRS-1264 / Gibson 46), this protein is Protein translocase subunit SecY.